Consider the following 857-residue polypeptide: DNA mismatch repair protein MutS (857 aa).

An ATP-binding site is contributed by 608–615 (GPNMSGKS).

It belongs to the DNA mismatch repair MutS family.

This protein is involved in the repair of mismatches in DNA. It is possible that it carries out the mismatch recognition step. This protein has a weak ATPase activity. The polypeptide is DNA mismatch repair protein MutS (Lactobacillus johnsonii (strain CNCM I-12250 / La1 / NCC 533)).